Reading from the N-terminus, the 66-residue chain is Large ribosomal subunit protein bL31 (66 aa).

The Zn(2+) site is built by Cys16, Cys18, Cys36, and Cys39.

The protein belongs to the bacterial ribosomal protein bL31 family. Type A subfamily. In terms of assembly, part of the 50S ribosomal subunit. It depends on Zn(2+) as a cofactor.

Its function is as follows. Binds the 23S rRNA. In Geobacter metallireducens (strain ATCC 53774 / DSM 7210 / GS-15), this protein is Large ribosomal subunit protein bL31.